The following is a 107-amino-acid chain: Nucleoid-associated protein Msil_0275 (107 aa).

It belongs to the YbaB/EbfC family. In terms of assembly, homodimer.

It localises to the cytoplasm. The protein resides in the nucleoid. In terms of biological role, binds to DNA and alters its conformation. May be involved in regulation of gene expression, nucleoid organization and DNA protection. The sequence is that of Nucleoid-associated protein Msil_0275 from Methylocella silvestris (strain DSM 15510 / CIP 108128 / LMG 27833 / NCIMB 13906 / BL2).